The primary structure comprises 164 residues: SsrA-binding protein (164 aa).

The disordered stretch occupies residues 143 to 164 (HDKRQDEKQKSIKKEINSVLKR). The segment covering 145-158 (KRQDEKQKSIKKEI) has biased composition (basic and acidic residues).

Belongs to the SmpB family.

The protein resides in the cytoplasm. In terms of biological role, required for rescue of stalled ribosomes mediated by trans-translation. Binds to transfer-messenger RNA (tmRNA), required for stable association of tmRNA with ribosomes. tmRNA and SmpB together mimic tRNA shape, replacing the anticodon stem-loop with SmpB. tmRNA is encoded by the ssrA gene; the 2 termini fold to resemble tRNA(Ala) and it encodes a 'tag peptide', a short internal open reading frame. During trans-translation Ala-aminoacylated tmRNA acts like a tRNA, entering the A-site of stalled ribosomes, displacing the stalled mRNA. The ribosome then switches to translate the ORF on the tmRNA; the nascent peptide is terminated with the 'tag peptide' encoded by the tmRNA and targeted for degradation. The ribosome is freed to recommence translation, which seems to be the essential function of trans-translation. In Prochlorococcus marinus (strain MIT 9312), this protein is SsrA-binding protein.